A 451-amino-acid chain; its full sequence is Phosphoglucosamine mutase (451 aa).

Residue Ser101 is the Phosphoserine intermediate of the active site. Residues Ser101, Asp242, Asp244, and Asp246 each contribute to the Mg(2+) site. Ser101 carries the post-translational modification Phosphoserine.

It belongs to the phosphohexose mutase family. Mg(2+) is required as a cofactor. Post-translationally, activated by phosphorylation.

The catalysed reaction is alpha-D-glucosamine 1-phosphate = D-glucosamine 6-phosphate. In terms of biological role, catalyzes the conversion of glucosamine-6-phosphate to glucosamine-1-phosphate. This chain is Phosphoglucosamine mutase, found in Beijerinckia indica subsp. indica (strain ATCC 9039 / DSM 1715 / NCIMB 8712).